A 335-amino-acid polypeptide reads, in one-letter code: Glycerol-3-phosphate dehydrogenase [NAD(P)+] (335 aa).

NADPH-binding residues include serine 15, tyrosine 16, histidine 36, and lysine 110. 3 residues coordinate sn-glycerol 3-phosphate: lysine 110, glycine 139, and threonine 141. An NADPH-binding site is contributed by alanine 143. 5 residues coordinate sn-glycerol 3-phosphate: lysine 195, aspartate 248, serine 258, arginine 259, and asparagine 260. The active-site Proton acceptor is the lysine 195. Position 259 (arginine 259) interacts with NADPH. NADPH contacts are provided by valine 283 and glutamate 285.

This sequence belongs to the NAD-dependent glycerol-3-phosphate dehydrogenase family.

The protein resides in the cytoplasm. It catalyses the reaction sn-glycerol 3-phosphate + NAD(+) = dihydroxyacetone phosphate + NADH + H(+). It carries out the reaction sn-glycerol 3-phosphate + NADP(+) = dihydroxyacetone phosphate + NADPH + H(+). The protein operates within membrane lipid metabolism; glycerophospholipid metabolism. Functionally, catalyzes the reduction of the glycolytic intermediate dihydroxyacetone phosphate (DHAP) to sn-glycerol 3-phosphate (G3P), the key precursor for phospholipid synthesis. This Haemophilus influenzae (strain 86-028NP) protein is Glycerol-3-phosphate dehydrogenase [NAD(P)+].